Consider the following 229-residue polypeptide: Potassium/proton antiporter CemA (229 aa).

3 helical membrane-spanning segments follow: residues 6–26 (AFIP…ISLS), 114–134 (ILCF…LLII), and 189–209 (IISG…KYWI).

The protein belongs to the CemA family.

The protein localises to the plastid. It localises to the chloroplast inner membrane. The enzyme catalyses K(+)(in) + H(+)(out) = K(+)(out) + H(+)(in). In terms of biological role, contributes to K(+)/H(+) antiport activity by supporting proton efflux to control proton extrusion and homeostasis in chloroplasts in a light-dependent manner to modulate photosynthesis. Prevents excessive induction of non-photochemical quenching (NPQ) under continuous-light conditions. Indirectly promotes efficient inorganic carbon uptake into chloroplasts. This chain is Potassium/proton antiporter CemA, found in Carica papaya (Papaya).